Reading from the N-terminus, the 433-residue chain is Probable exopolygalacturonase X (433 aa).

Residues 1–21 (MKLTQATTLLLSLGLSLPVEG) form the signal peptide. The tract at residues 30-54 (VGPKPPFRPLPASTPRNKTCQVQSN) is disordered. Polar residues predominate over residues 43–54 (TPRNKTCQVQSN). 3 N-linked (GlcNAc...) asparagine glycosylation sites follow: asparagine 46, asparagine 127, and asparagine 197. One copy of the PbH1 1 repeat lies at 229-250 (SSNIVIQNSVINNGDDCVSFKP). The active-site Proton donor is the aspartate 243. Residues cysteine 245 and cysteine 262 are joined by a disulfide bond. N-linked (GlcNAc...) asparagine glycosylation is found at asparagine 251 and asparagine 263. The PbH1 2 repeat unit spans residues 252 to 272 (STEILVQNLHCNGSHGISVGS). The active site involves histidine 266. N-linked (GlcNAc...) asparagine glycosylation is found at asparagine 290, asparagine 295, asparagine 327, asparagine 352, and asparagine 362. A PbH1 3 repeat occupies 325-346 (VQNITYDKMYIENVDWAIEVTQ). The PbH1 4 repeat unit spans residues 360–403 (PSNLTISDVYFNDLTGVTSGKNDPNVGTIICSSPDVCSGIHATN). Cysteine 390 and cysteine 396 form a disulfide bridge.

Belongs to the glycosyl hydrolase 28 family.

It localises to the secreted. It catalyses the reaction [(1-&gt;4)-alpha-D-galacturonosyl](n) + H2O = alpha-D-galacturonate + [(1-&gt;4)-alpha-D-galacturonosyl](n-1). In terms of biological role, specific in hydrolyzing the terminal glycosidic bond of polygalacturonic acid and oligogalacturonates. In Aspergillus flavus (strain ATCC 200026 / FGSC A1120 / IAM 13836 / NRRL 3357 / JCM 12722 / SRRC 167), this protein is Probable exopolygalacturonase X (pgaX).